Here is a 151-residue protein sequence, read N- to C-terminus: Transcriptional regulator MraZ (151 aa).

2 SpoVT-AbrB domains span residues 5–52 (ANAI…PLSE) and 81–124 (AVDL…DEDA).

It belongs to the MraZ family. Forms oligomers.

It is found in the cytoplasm. The protein localises to the nucleoid. This is Transcriptional regulator MraZ from Pseudomonas syringae pv. tomato (strain ATCC BAA-871 / DC3000).